A 126-amino-acid chain; its full sequence is Non-specific lipid-transfer protein 15 (126 aa).

The signal sequence occupies residues 1–22 (MSKSIFVVCITLLVVLSPTLNA). 4 disulfides stabilise this stretch: Cys34-Cys80, Cys45-Cys57, Cys58-Cys100, and Cys78-Cys114.

This sequence belongs to the plant LTP family.

In terms of biological role, plant non-specific lipid-transfer proteins transfer phospholipids as well as galactolipids across membranes. May play a role in wax or cutin deposition in the cell walls of expanding epidermal cells and certain secretory tissues. This Arabidopsis thaliana (Mouse-ear cress) protein is Non-specific lipid-transfer protein 15 (LTP15).